We begin with the raw amino-acid sequence, 482 residues long: Glutamate--tRNA ligase (482 aa).

Positions 9–19 (PSPTGYLHIGG) match the 'HIGH' region motif. A 'KMSKS' region motif is present at residues 252–256 (KLSKR). Lysine 255 lines the ATP pocket.

This sequence belongs to the class-I aminoacyl-tRNA synthetase family. Glutamate--tRNA ligase type 1 subfamily. As to quaternary structure, monomer.

It is found in the cytoplasm. It catalyses the reaction tRNA(Glu) + L-glutamate + ATP = L-glutamyl-tRNA(Glu) + AMP + diphosphate. In terms of biological role, catalyzes the attachment of glutamate to tRNA(Glu) in a two-step reaction: glutamate is first activated by ATP to form Glu-AMP and then transferred to the acceptor end of tRNA(Glu). The chain is Glutamate--tRNA ligase from Ureaplasma parvum serovar 3 (strain ATCC 27815 / 27 / NCTC 11736).